We begin with the raw amino-acid sequence, 386 residues long: Protein phosphatase methylesterase 1 (386 aa).

The interval 1–38 (MSALEKSMHLGRLPSRPPLPGSGGSQSGAKMRMGPGRK) is disordered. Ser15 bears the Phosphoserine mark. At Arg16 the chain carries Asymmetric dimethylarginine; alternate. Arg16 is subject to Omega-N-methylarginine; alternate. Ser42 is subject to Phosphoserine. Ser156 is a catalytic residue. Acidic residues predominate over residues 254–265 (IIEEEEEDEEGS). The segment at 254-280 (IIEEEEEDEEGSESISKRKKEDDMETK) is disordered. A compositionally biased stretch (basic and acidic residues) spans 268–280 (ISKRKKEDDMETK). The active site involves His349.

This sequence belongs to the AB hydrolase superfamily. As to quaternary structure, binds PPP2CA and PPP2CB. Post-translationally, phosphorylated by SIK1 following increases in intracellular sodium, leading to dissociation from the protein phosphatase 2A (PP2A) complex and subsequent dephosphorylation of sodium/potassium-transporting ATPase ATP1A1.

The catalysed reaction is [phosphatase 2A protein]-C-terminal L-leucine methyl ester + H2O = [phosphatase 2A protein]-C-terminal L-leucine + methanol + H(+). Its function is as follows. Demethylates proteins that have been reversibly carboxymethylated. Demethylates PPP2CB (in vitro) and PPP2CA. Binding to PPP2CA displaces the manganese ion and inactivates the enzyme. The protein is Protein phosphatase methylesterase 1 (PPME1) of Pongo abelii (Sumatran orangutan).